Here is an 872-residue protein sequence, read N- to C-terminus: Alanine--tRNA ligase (872 aa).

Residues His563, His567, Cys665, and His669 each coordinate Zn(2+).

The protein belongs to the class-II aminoacyl-tRNA synthetase family. The cofactor is Zn(2+).

It is found in the cytoplasm. It catalyses the reaction tRNA(Ala) + L-alanine + ATP = L-alanyl-tRNA(Ala) + AMP + diphosphate. Catalyzes the attachment of alanine to tRNA(Ala) in a two-step reaction: alanine is first activated by ATP to form Ala-AMP and then transferred to the acceptor end of tRNA(Ala). Also edits incorrectly charged Ser-tRNA(Ala) and Gly-tRNA(Ala) via its editing domain. The chain is Alanine--tRNA ligase from Bacteroides fragilis (strain ATCC 25285 / DSM 2151 / CCUG 4856 / JCM 11019 / LMG 10263 / NCTC 9343 / Onslow / VPI 2553 / EN-2).